A 206-amino-acid polypeptide reads, in one-letter code: Flavin prenyltransferase UbiX (206 aa).

Residues glycine 11–serine 13, serine 37, serine 103–threonine 106, and arginine 138 each bind FMN. Dimethylallyl phosphate-binding residues include tyrosine 168 and arginine 184.

It belongs to the UbiX/PAD1 family.

The catalysed reaction is dimethylallyl phosphate + FMNH2 = prenylated FMNH2 + phosphate. Flavin prenyltransferase that catalyzes the synthesis of the prenylated FMN cofactor (prenyl-FMN) for 4-hydroxy-3-polyprenylbenzoic acid decarboxylase UbiD. The prenyltransferase is metal-independent and links a dimethylallyl moiety from dimethylallyl monophosphate (DMAP) to the flavin N5 and C6 atoms of FMN. In Synechocystis sp. (strain ATCC 27184 / PCC 6803 / Kazusa), this protein is Flavin prenyltransferase UbiX.